A 210-amino-acid polypeptide reads, in one-letter code: Guanylate kinase (210 aa).

The Guanylate kinase-like domain maps to Gly-6–Gln-184. Ala-13–Thr-20 is an ATP binding site.

It belongs to the guanylate kinase family.

It is found in the cytoplasm. The catalysed reaction is GMP + ATP = GDP + ADP. Functionally, essential for recycling GMP and indirectly, cGMP. This Nitrosospira multiformis (strain ATCC 25196 / NCIMB 11849 / C 71) protein is Guanylate kinase.